A 334-amino-acid polypeptide reads, in one-letter code: Protein RecA (334 aa).

65–72 (GNESSGKT) provides a ligand contact to ATP.

This sequence belongs to the RecA family.

The protein localises to the cytoplasm. Its function is as follows. Can catalyze the hydrolysis of ATP in the presence of single-stranded DNA, the ATP-dependent uptake of single-stranded DNA by duplex DNA, and the ATP-dependent hybridization of homologous single-stranded DNAs. It interacts with LexA causing its activation and leading to its autocatalytic cleavage. The protein is Protein RecA of Ureaplasma parvum serovar 3 (strain ATCC 27815 / 27 / NCTC 11736).